Consider the following 340-residue polypeptide: Large ribosomal subunit protein uL29m (340 aa).

The span at 1-10 shows a compositional bias: polar residues; the sequence is MIRSLHTSAV. Residues 1–22 are disordered; sequence MIRSLHTSAVRQGRKKWPKPLP.

This sequence belongs to the universal ribosomal protein uL29 family. As to quaternary structure, component of the mitochondrial large ribosomal subunit. Mature mitochondrial ribosomes consist of a small (37S) and a large (54S) subunit. The 37S subunit contains at least 33 different proteins and 1 molecule of RNA (15S). The 54S subunit contains at least 45 different proteins and 1 molecule of RNA (21S).

It is found in the mitochondrion. In Yarrowia lipolytica (strain CLIB 122 / E 150) (Yeast), this protein is Large ribosomal subunit protein uL29m (MRPL4).